Here is a 9439-residue protein sequence, read N- to C-terminus: Extracellular matrix-binding protein ebh (9439 aa).

FIVAR domains lie at 1815 to 1871 (ARRR…VNSA), 1901 to 1957 (AKEQ…INDA), 1985 to 2041 (AYDT…VRDA), 2071 to 2127 (AKKR…ITSE), 2155 to 2211 (AYNK…VTQA), 2241 to 2297 (AKNR…ISSE), 2325 to 2381 (AYNK…VEDA), 2411 to 2467 (AKEK…ITEN), 2488 to 2551 (DTTS…VNNA), 2581 to 2638 (ARNR…STEI), 2665 to 2720 (AKNQ…IRTN), 2748 to 2804 (AKTA…VSDE), 2832 to 2888 (AYNQ…VNNA), 2918 to 2974 (AKEQ…ISNA), 3002 to 3058 (AYNQ…VTAA), 3088 to 3144 (AKQQ…ITNE), 3172 to 3228 (AYNQ…VAQA), 3258 to 3314 (AKNQ…ISDE), 3335 to 3398 (DTTE…VNNA), 3428 to 3484 (ARLN…ITTE), 3512 to 3567 (AKTA…IKTN), 3595 to 3650 (IKRQ…VKES), 3678 to 3733 (AKNR…IRQN), 3802 to 3860 (SMTA…IDQK), 3928 to 3983 (AMTQ…LDPA), 4056 to 4114 (AMQA…VNQK), 4182 to 4240 (SMGT…VDNA), 4308 to 4365 (AMHT…INQK), 4433 to 4491 (VMEQ…IEQA), and 4559 to 4617 (SMQT…IDQT). Residues 2495–2507 (EVRKLSRRGDTNN) are compositionally biased toward basic and acidic residues. A disordered region spans residues 2495 to 2514 (EVRKLSRRGDTNNKKPSSVS). Residues 2925 to 2938 (AVDQVPSTEGMTQQ) show a composition bias toward polar residues. Residues 2925-2951 (AVDQVPSTEGMTQQTKDDYNSKQQAAQ) are disordered. The segment at 4649-4674 (GYLNDPQKSGEESLVNGSNTRSEVEE) is disordered. 14 consecutive FIVAR domains span residues 4685–4743 (AMKQ…IEQK), 4811–4869 (AMQA…IEQA), 4937–4995 (AMSN…IEQA), 5063–5115 (AMEA…VLDK), 5189–5246 (AMLG…INQL), 5314–5372 (LMGA…VTTA), 5440–5498 (AMGE…IDQA), 5566–5624 (AMKK…ITNA), 5692–5750 (AMKQ…IADT), 5818–5875 (DMST…LQDL), 5943–6000 (AMKA…IKQA), 6068–6126 (KMEE…INRT), 6194–6252 (AMQQ…IQAI), and 6320–6378 (EMGT…IADA). Over residues 5699 to 5712 (QVNQDDQISNSSPF) the composition is skewed to polar residues. The segment at 5699–5719 (QVNQDDQISNSSPFINEDSDK) is disordered. Residues 6413 to 6434 (NNSQRQSEHDEINSAPSRTEVS) form a disordered region. FIVAR domains are found at residues 6446–6504 (AMRQ…IEDA), 6572–6630 (AMKA…INRA), 6698–6755 (SMNQ…IDQA), 6823–6877 (TMKA…ANDE), 6949–7007 (AMKK…INTI), 7075–7133 (SMNT…VERA), 7201–7259 (DMKK…IENA), 7327–7384 (AMKH…IKQL), 7452–7510 (AMEN…IEHA), 7578–7636 (AMKA…INSI), 7704–7762 (AMET…VDIV), 7830–7888 (AMKS…VRQA), 7956–8010 (VMGK…TKQA), 8078–8137 (IMGE…IDTF), 8205–8264 (AMKS…IQGL), 8332–8391 (AMKD…VLGL), 8459–8518 (KMKL…IQHL), and 8587–8643 (AMQG…ANII). A helical transmembrane segment spans residues 9306 to 9324 (TVGVITLTGLLSSFWLVLA). Basic and acidic residues-rich tracts occupy residues 9363–9375 (DKEEQIQNDDKHS), 9386–9395 (EKQLSEEDIH), and 9404–9413 (QNSDNKDTKQ). Positions 9363-9439 (DKEEQIQNDD…VVKTKKRSKK (77 aa)) are disordered. Residues 9414 to 9439 (KKVTSKKKKTPQSTKKVVKTKKRSKK) show a composition bias toward basic residues.

Its subcellular location is the cell membrane. The sequence is that of Extracellular matrix-binding protein ebh (ebh) from Staphylococcus epidermidis (strain ATCC 12228 / FDA PCI 1200).